A 665-amino-acid polypeptide reads, in one-letter code: GRB2-associated-binding protein 2 (665 aa).

Residue S2 is modified to Phosphoserine. Residues 8–119 (DVVCTGWLRK…WVQSICQICG (112 aa)) form the PH domain. The tract at residues 131–183 (RNLSSASHGPRSSPAEFSSSQHLLRERKSSAPSHSSQPTLFTFEPPMTSHMQP) is disordered. S135, S142, S143, S149, S150, S160, S165, S211, S220, and S261 each carry phosphoserine. A compositionally biased stretch (polar residues) spans 160 to 170 (SAPSHSSQPTL). T262 bears the Phosphothreonine mark. Residue Y263 is modified to Phosphotyrosine. T275 carries the post-translational modification Phosphothreonine. Phosphoserine occurs at positions 278 and 282. At T284 the chain carries Phosphothreonine. Y290 carries the phosphotyrosine modification. T328 carries the phosphothreonine modification. Disordered stretches follow at residues 340–442 (TSGD…ENYV) and 491–517 (PSRG…PTPL). Residues 348 to 355 (PPPRPPKP) carry the SH3-binding motif. S365 is subject to Phosphoserine. Phosphothreonine is present on residues T382 and T388. A Phosphoserine modification is found at S402. The residue at position 405 (T405) is a Phosphothreonine. The segment covering 412–423 (GSGESASWSAES) has biased composition (low complexity). Phosphoserine occurs at positions 420 and 423. Y441 carries the post-translational modification Phosphotyrosine. The SH3-binding motif lies at 499–508 (PPPVNRNLKP). S532 carries the phosphoserine modification. 2 stretches are compositionally biased toward polar residues: residues 548 to 566 (SSSQ…STDS) and 578 to 600 (NPVS…STGS). Residues 548-631 (SSSQYCRPIS…SSVTSDEKVD (84 aa)) are disordered. The residue at position 612 (S612) is a Phosphoserine. Y632 is subject to Phosphotyrosine. Residues 646 to 659 (TMQEWTDVRQSSEP) are compositionally biased toward polar residues. The interval 646 to 665 (TMQEWTDVRQSSEPSKGAKL) is disordered.

It belongs to the GAB family. In terms of assembly, part of a complex composed of EEIG1, TNFRSF11A/RANK, PLCG2, GAB2, TEC and BTK; complex formation increases in the presence of TNFSF11/RANKL. Interacts with HCK. Interacts with SHC1; may mediate interaction with receptors. Interacts with SYK. Interacts with PI-3 kinase. Interacts with GRB2 (via SH3 2 domain). Interacts (phosphorylated) with PTPN11. Interacts with TNFRSF11A (via cytoplasmic domain). Interacts (phosphorylated) with 14-3-3 family proteins SFN, YWHAB, YWHAE, YWHAG, YWHAH, YWHAQ and YWHAZ; prevents interaction with GRB2 and attenuates GAB2 signaling. In terms of processing, phosphorylated upon EGF stimulation. Phosphorylated on tyrosine residues by HCK upon IL6 signaling. Phosphorylated on tyrosine residue(s) by the thrombopoietin receptor (TPOR), stem cell factor receptor (SCFR), and T-cell and B-cell antigen receptors, gp130, IL-2R and IL-3R. Phosphorylated upon stimulation of TNFRSF11A/RANK by TNFSF11/RANKL. Post-translationally, dephosphorylated by PTPN11.

It is found in the cytoplasm. Its subcellular location is the cell membrane. It localises to the membrane raft. In terms of biological role, adapter protein which acts downstream of several membrane receptors including cytokine, antigen, hormone, cell matrix and growth factor receptors to regulate multiple signaling pathways. Regulates osteoclast differentiation mediating the TNFRSF11A/RANK signaling. In allergic response, it plays a role in mast cells activation and degranulation through PI-3-kinase regulation. Also involved in the regulation of cell proliferation and hematopoiesis. The protein is GRB2-associated-binding protein 2 (Gab2) of Rattus norvegicus (Rat).